Consider the following 222-residue polypeptide: Probable nicotinate-nucleotide adenylyltransferase (222 aa).

The protein belongs to the NadD family.

It catalyses the reaction nicotinate beta-D-ribonucleotide + ATP + H(+) = deamido-NAD(+) + diphosphate. Its pathway is cofactor biosynthesis; NAD(+) biosynthesis; deamido-NAD(+) from nicotinate D-ribonucleotide: step 1/1. Catalyzes the reversible adenylation of nicotinate mononucleotide (NaMN) to nicotinic acid adenine dinucleotide (NaAD). This chain is Probable nicotinate-nucleotide adenylyltransferase, found in Pseudomonas syringae pv. tomato (strain ATCC BAA-871 / DC3000).